The chain runs to 379 residues: Protein RecA (379 aa).

The tract at residues 1–23 (MSVDVKSAQSSKSDSLQVEPRPG) is disordered. Residues 7 to 16 (SAQSSKSDSL) show a composition bias toward polar residues. 84-91 (GPESSGKT) is a binding site for ATP.

It belongs to the RecA family.

The protein resides in the cytoplasm. Its function is as follows. Can catalyze the hydrolysis of ATP in the presence of single-stranded DNA, the ATP-dependent uptake of single-stranded DNA by duplex DNA, and the ATP-dependent hybridization of homologous single-stranded DNAs. It interacts with LexA causing its activation and leading to its autocatalytic cleavage. The sequence is that of Protein RecA from Prochlorococcus marinus (strain MIT 9313).